A 65-amino-acid polypeptide reads, in one-letter code: Large ribosomal subunit protein uL29 (65 aa).

Belongs to the universal ribosomal protein uL29 family.

This is Large ribosomal subunit protein uL29 from Syntrophus aciditrophicus (strain SB).